The sequence spans 779 residues: MNNKILEQLEFNKVKELILPYLKTEQSQEELSELEPMTEAPKIEKSFNEISDMEQIFVEHHSFGIVSLSSISESLKRLELSADLNIQELLAIKKVLQSSSDMIHFYSDLDNVSFQSLDRLFENLEQFPNLQGSFQAINDGGFLEHFASPELERIRRQLTNSERRVRQILQDMLKEKAELLSENLIASRSGRSVLPVKNTYRNRISGVVHDISSSGSTVYIEPRAVVTLNEEITQLRADERHEESRILHAFSDLLRPHVATIRNNAWILGHLDFVRAKYLFMSDNKATIPEISNDSTLALINVRHPLLSNPVANDLHFDQDLTAIVITGPNTGGKTIMLKTLGLAQLMGQSGLPVLADKGSKIAVFNNIFADIGDEQSIEQSLSTFSSHMTHIVSILNEADHNSLVLFDELGAGTDPQEGASLAMAILEHLRLSNIKTMATTHYPELKAYGIETNFVENASMEFDAETLSPTYRFMQGVPGRSNAFEIASRLGLAPFIVKQAKQMTDSDSDVNRIIEQLEAQTLETRRRLDHIKEVEQENLKFNRAVKKLYNEFSHERDKELEKIYQEAQEIVDMALNESDTILKKLNDKSQLKPHEIIDAKAQIKKLAPQVDLSKNKVLNKAKKIKAARAPRIGDDIIVTSYGQRGTLTSQLKDGRWEAQVGIIKMTLTQDEFTLVRVQEEQKVKSKQINVVKKADSSGPRARLDLRGKRYEEAMQELDNFIDQALLNNMGQVDIIHGIGTGVIREGVTKYLRRNKHVKHFAYAPQNAGGSGATIVTLG.

328 to 335 serves as a coordination point for ATP; sequence GPNTGGKT. One can recognise a Smr domain in the interval 704–779; it reads LDLRGKRYEE…GSGATIVTLG (76 aa).

Belongs to the DNA mismatch repair MutS family. MutS2 subfamily. Homodimer. Binds to stalled ribosomes, contacting rRNA.

Functionally, endonuclease that is involved in the suppression of homologous recombination and thus may have a key role in the control of bacterial genetic diversity. Its function is as follows. Acts as a ribosome collision sensor, splitting the ribosome into its 2 subunits. Detects stalled/collided 70S ribosomes which it binds and splits by an ATP-hydrolysis driven conformational change. Acts upstream of the ribosome quality control system (RQC), a ribosome-associated complex that mediates the extraction of incompletely synthesized nascent chains from stalled ribosomes and their subsequent degradation. Probably generates substrates for RQC. In Streptococcus agalactiae serotype Ia (strain ATCC 27591 / A909 / CDC SS700), this protein is Endonuclease MutS2.